The chain runs to 548 residues: MAAKDVVFGGEARARMVEGVNILANAVKVTLGPKGRNVVLERSFGAPTVTKDGVSVAKEIELKDKLQNMGAQMVKEVASKTSDNAGDGTTTATVLAQAIVREGMKYVAAGMNPMDLKRGIDKAVVSLVEQLKKQSKPTTTSKEIAQVGTISANSDDDVGQIIASAMDKVGKEGVITVEDGKSLNNELDVVEGMQFDRGYLSPYFINNPEKQSAVLDNPFVLLYDKKISNIRDLLPTLEQVAKSGRPLLIIAEEVEGEALATLVVNTIRGILKVVAVKAPGFGDRRKAMLEDIAILTGGKVIAEEVGLTLEKVTLADLGQAKRVEVGKENTTIIDGAGAAGDIEARVKQVRVQIEEATSDYDREKLQERVAKLAGGVAVIKVGAATEVEMKEKKARVEDALHATRAAVEEGIVAGGGVALLRAKQAAGAIKGDNADQDAGIKLILRAIEEPLRIIVTNAGDEASVVVNAVLAGKGNYGYNAANGTYGDMIEMGILDPTKVTRTALQNAASVAALMLTTEAMVAESPKDDAPAGGMPGGMGGMGGMGMDM.

ATP contacts are provided by residues 30-33 (TLGP), K51, 87-91 (DGTTT), G415, 479-481 (NAA), and D495.

The protein belongs to the chaperonin (HSP60) family. In terms of assembly, forms a cylinder of 14 subunits composed of two heptameric rings stacked back-to-back. Interacts with the co-chaperonin GroES.

The protein resides in the cytoplasm. The catalysed reaction is ATP + H2O + a folded polypeptide = ADP + phosphate + an unfolded polypeptide.. In terms of biological role, together with its co-chaperonin GroES, plays an essential role in assisting protein folding. The GroEL-GroES system forms a nano-cage that allows encapsulation of the non-native substrate proteins and provides a physical environment optimized to promote and accelerate protein folding. In Methylibium petroleiphilum (strain ATCC BAA-1232 / LMG 22953 / PM1), this protein is Chaperonin GroEL.